A 357-amino-acid chain; its full sequence is Peptide chain release factor 1 (357 aa).

Position 232 is an N5-methylglutamine (Q232). The segment covering 282–291 (KQRAEQEAAR) has biased composition (basic and acidic residues). Positions 282–302 (KQRAEQEAARRSQVGTGDRSE) are disordered.

Belongs to the prokaryotic/mitochondrial release factor family. Post-translationally, methylated by PrmC. Methylation increases the termination efficiency of RF1.

It localises to the cytoplasm. Peptide chain release factor 1 directs the termination of translation in response to the peptide chain termination codons UAG and UAA. This is Peptide chain release factor 1 from Solidesulfovibrio magneticus (strain ATCC 700980 / DSM 13731 / RS-1) (Desulfovibrio magneticus).